Reading from the N-terminus, the 394-residue chain is Elongation factor Tu 2 (394 aa).

The tr-type G domain maps to 10–204 (KPHVNVGTIG…ALDSYIPEPE (195 aa)). The interval 19–26 (GHVDHGKT) is G1. Position 19–26 (19–26 (GHVDHGKT)) interacts with GTP. Threonine 26 contributes to the Mg(2+) binding site. A G2 region spans residues 60 to 64 (GITIS). A G3 region spans residues 81 to 84 (DCPG). GTP is bound by residues 81–85 (DCPGH) and 136–139 (NKCD). Positions 136 to 139 (NKCD) are G4. Positions 174–176 (SAL) are G5.

The protein belongs to the TRAFAC class translation factor GTPase superfamily. Classic translation factor GTPase family. EF-Tu/EF-1A subfamily. In terms of assembly, monomer.

It is found in the cytoplasm. The enzyme catalyses GTP + H2O = GDP + phosphate + H(+). Its function is as follows. GTP hydrolase that promotes the GTP-dependent binding of aminoacyl-tRNA to the A-site of ribosomes during protein biosynthesis. The polypeptide is Elongation factor Tu 2 (Photorhabdus laumondii subsp. laumondii (strain DSM 15139 / CIP 105565 / TT01) (Photorhabdus luminescens subsp. laumondii)).